The chain runs to 125 residues: Protein ApaG (125 aa).

The region spanning 1-125 (MFTSSKVAIQ…FRLAIPTLIN (125 aa)) is the ApaG domain.

This is Protein ApaG from Proteus mirabilis (strain HI4320).